A 187-amino-acid polypeptide reads, in one-letter code: GTP cyclohydrolase 1 (187 aa).

Residues Cys76, His79, and Cys148 each coordinate Zn(2+).

This sequence belongs to the GTP cyclohydrolase I family. Toroid-shaped homodecamer, composed of two pentamers of five dimers.

The enzyme catalyses GTP + H2O = 7,8-dihydroneopterin 3'-triphosphate + formate + H(+). The protein operates within cofactor biosynthesis; 7,8-dihydroneopterin triphosphate biosynthesis; 7,8-dihydroneopterin triphosphate from GTP: step 1/1. The protein is GTP cyclohydrolase 1 of Acetivibrio thermocellus (strain ATCC 27405 / DSM 1237 / JCM 9322 / NBRC 103400 / NCIMB 10682 / NRRL B-4536 / VPI 7372) (Clostridium thermocellum).